Consider the following 288-residue polypeptide: 4-hydroxybenzoate octaprenyltransferase (288 aa).

7 helical membrane passes run 38–58, 98–120, 141–161, 163–183, 213–233, 238–258, and 268–288; these read IAAQ…GVFL, ILFA…MTIW, LLQV…FSAV, ESLP…SVIY, LIIG…GSLA, VYYI…KLMV, and AFLN…LSYL.

It belongs to the UbiA prenyltransferase family. Mg(2+) is required as a cofactor.

It localises to the cell inner membrane. The enzyme catalyses all-trans-octaprenyl diphosphate + 4-hydroxybenzoate = 4-hydroxy-3-(all-trans-octaprenyl)benzoate + diphosphate. It participates in cofactor biosynthesis; ubiquinone biosynthesis. In terms of biological role, catalyzes the prenylation of para-hydroxybenzoate (PHB) with an all-trans polyprenyl group. Mediates the second step in the final reaction sequence of ubiquinone-8 (UQ-8) biosynthesis, which is the condensation of the polyisoprenoid side chain with PHB, generating the first membrane-bound Q intermediate 3-octaprenyl-4-hydroxybenzoate. The chain is 4-hydroxybenzoate octaprenyltransferase from Providencia stuartii.